A 281-amino-acid polypeptide reads, in one-letter code: MITTQEIQQIREQIRTWRTKGETIAFVPTMGNLHLGHITLIKEAAKRADHVVASIFVNPMQFGANEDLDAYPRTLEADKLALSDAGAELLFTPTPDIIYPKGMEQQTYVEVPKIGDQLCGASRPGHFRGVATVVCKLFNIVQPDIALFGRKDFQQLMIIKTMVEDLSLPIEIVGIDTIRETSGLAMSSRNGYLSTAQKSQAAVLKQTMDQISSAVKQGASLDLAIENGKQALIDSGFTPDYLELRNAKDLSLVTDGQDELVILAAAYMGNTRLIDNLCFTR.

Position 30-37 (30-37 (MGNLHLGH)) interacts with ATP. Catalysis depends on His-37, which acts as the Proton donor. Gln-61 is a (R)-pantoate binding site. Residue Gln-61 coordinates beta-alanine. Position 149 to 152 (149 to 152 (GRKD)) interacts with ATP. Gln-155 is a binding site for (R)-pantoate. Residues Ile-178 and 186 to 189 (MSSR) each bind ATP.

It belongs to the pantothenate synthetase family. Homodimer.

It is found in the cytoplasm. The catalysed reaction is (R)-pantoate + beta-alanine + ATP = (R)-pantothenate + AMP + diphosphate + H(+). It functions in the pathway cofactor biosynthesis; (R)-pantothenate biosynthesis; (R)-pantothenate from (R)-pantoate and beta-alanine: step 1/1. In terms of biological role, catalyzes the condensation of pantoate with beta-alanine in an ATP-dependent reaction via a pantoyl-adenylate intermediate. This Shewanella woodyi (strain ATCC 51908 / MS32) protein is Pantothenate synthetase.